The chain runs to 166 residues: SsrA-binding protein (166 aa).

The disordered stretch occupies residues lysine 146 to tyrosine 166.

It belongs to the SmpB family.

It is found in the cytoplasm. Functionally, required for rescue of stalled ribosomes mediated by trans-translation. Binds to transfer-messenger RNA (tmRNA), required for stable association of tmRNA with ribosomes. tmRNA and SmpB together mimic tRNA shape, replacing the anticodon stem-loop with SmpB. tmRNA is encoded by the ssrA gene; the 2 termini fold to resemble tRNA(Ala) and it encodes a 'tag peptide', a short internal open reading frame. During trans-translation Ala-aminoacylated tmRNA acts like a tRNA, entering the A-site of stalled ribosomes, displacing the stalled mRNA. The ribosome then switches to translate the ORF on the tmRNA; the nascent peptide is terminated with the 'tag peptide' encoded by the tmRNA and targeted for degradation. The ribosome is freed to recommence translation, which seems to be the essential function of trans-translation. The protein is SsrA-binding protein of Synechococcus sp. (strain CC9605).